The following is a 462-amino-acid chain: Glycine--tRNA ligase (462 aa).

Positions 98 and 174 each coordinate substrate. ATP is bound by residues 206-208, 216-221, 290-291, and 334-337; these read RNE, FRTREF, EL, and GADR. Residue 221 to 225 participates in substrate binding; the sequence is FEQME. A substrate-binding site is contributed by 330-334; the sequence is EPSLG.

Belongs to the class-II aminoacyl-tRNA synthetase family. In terms of assembly, homodimer.

Its subcellular location is the cytoplasm. It catalyses the reaction tRNA(Gly) + glycine + ATP = glycyl-tRNA(Gly) + AMP + diphosphate. Its function is as follows. Catalyzes the attachment of glycine to tRNA(Gly). This chain is Glycine--tRNA ligase, found in Lachnospira eligens (strain ATCC 27750 / DSM 3376 / VPI C15-48 / C15-B4) (Eubacterium eligens).